We begin with the raw amino-acid sequence, 183 residues long: Putative lipoprotein LpqE (183 aa).

A signal peptide spans 1 to 30 (MSRFKISLPALATRVAVLGFLTLMASVLGG). C31 carries N-palmitoyl cysteine lipidation. C31 is lipidated: S-diacylglycerol cysteine.

It localises to the cell membrane. This Mycobacterium leprae (strain TN) protein is Putative lipoprotein LpqE (lpqE).